The chain runs to 414 residues: xyloglucan O-acetyltransferase 2 (414 aa).

Residues methionine 1 to arginine 26 lie on the Cytoplasmic side of the membrane. The chain crosses the membrane as a helical; Signal-anchor for type II membrane protein span at residues phenylalanine 27–tyrosine 47. The Lumenal segment spans residues glutamine 48–arginine 414. Intrachain disulfides connect cysteine 70–cysteine 120, cysteine 91–cysteine 156, cysteine 100–cysteine 394, and cysteine 317–cysteine 390. Asparagine 88 carries N-linked (GlcNAc...) asparagine glycosylation. The GDS motif motif lies at glycine 143–serine 145. Catalysis depends on serine 145, which acts as the Nucleophile. Residues asparagine 205, asparagine 263, and asparagine 308 are each glycosylated (N-linked (GlcNAc...) asparagine). The active-site Proton donor is the aspartate 389. The DXXH motif signature appears at aspartate 389–histidine 392. Histidine 392 functions as the Proton acceptor in the catalytic mechanism.

This sequence belongs to the PC-esterase family. TBL subfamily.

It localises to the membrane. Functionally, xyloglucan acetyltransferase that catalyzes the acetylation of fucosylated Gal residues on xyloglucan side chains. Predominantly catalyze 6-O-monoacetylation of Gal residues in the Fuc-Gal-Xyl trisaccharide side chains of xyloglucan oligomers. Involved in xyloglucan specific O-acetylation in seeds. This chain is xyloglucan O-acetyltransferase 2, found in Arabidopsis thaliana (Mouse-ear cress).